The primary structure comprises 503 residues: Lysine--tRNA ligase (503 aa).

Glutamate 413 and glutamate 420 together coordinate Mg(2+).

Belongs to the class-II aminoacyl-tRNA synthetase family. In terms of assembly, homodimer. Mg(2+) is required as a cofactor.

It localises to the cytoplasm. The catalysed reaction is tRNA(Lys) + L-lysine + ATP = L-lysyl-tRNA(Lys) + AMP + diphosphate. This chain is Lysine--tRNA ligase, found in Mannheimia succiniciproducens (strain KCTC 0769BP / MBEL55E).